Reading from the N-terminus, the 98-residue chain is MALTKAEMSEHLFEKLGLSKRDAKDLVELFFEEIRRALENGEQVKLSGFGNFDLRDKNQRPGRNPKTGEDIPITARRVVTFRPGQKLKCRVENATPKD.

The tract at residues 49–71 (FGNFDLRDKNQRPGRNPKTGEDI) is disordered.

Belongs to the bacterial histone-like protein family. In terms of assembly, heterodimer of an alpha and a beta chain.

In terms of biological role, this protein is one of the two subunits of integration host factor, a specific DNA-binding protein that functions in genetic recombination as well as in transcriptional and translational control. This is Integration host factor subunit alpha from Edwardsiella ictaluri (strain 93-146).